A 155-amino-acid polypeptide reads, in one-letter code: 6,7-dimethyl-8-ribityllumazine synthase (155 aa).

5-amino-6-(D-ribitylamino)uracil contacts are provided by residues Phe-23, 57–59 (AFE), and 81–83 (AVI). 86–87 (AT) lines the (2S)-2-hydroxy-3-oxobutyl phosphate pocket. His-89 functions as the Proton donor in the catalytic mechanism. Phe-114 lines the 5-amino-6-(D-ribitylamino)uracil pocket. Arg-128 serves as a coordination point for (2S)-2-hydroxy-3-oxobutyl phosphate.

This sequence belongs to the DMRL synthase family.

It carries out the reaction (2S)-2-hydroxy-3-oxobutyl phosphate + 5-amino-6-(D-ribitylamino)uracil = 6,7-dimethyl-8-(1-D-ribityl)lumazine + phosphate + 2 H2O + H(+). Its pathway is cofactor biosynthesis; riboflavin biosynthesis; riboflavin from 2-hydroxy-3-oxobutyl phosphate and 5-amino-6-(D-ribitylamino)uracil: step 1/2. Functionally, catalyzes the formation of 6,7-dimethyl-8-ribityllumazine by condensation of 5-amino-6-(D-ribitylamino)uracil with 3,4-dihydroxy-2-butanone 4-phosphate. This is the penultimate step in the biosynthesis of riboflavin. The sequence is that of 6,7-dimethyl-8-ribityllumazine synthase from Geotalea uraniireducens (strain Rf4) (Geobacter uraniireducens).